Here is a 464-residue protein sequence, read N- to C-terminus: tRNA-2-methylthio-N(6)-dimethylallyladenosine synthase (464 aa).

Residues 5–122 (RKLYVKSFGC…LPEMLARVRD (118 aa)) form the MTTase N-terminal domain. The [4Fe-4S] cluster site is built by cysteine 14, cysteine 50, cysteine 85, cysteine 163, cysteine 167, and cysteine 170. The region spanning 149-383 (KKRGPTAFVT…VLEASKTAFD (235 aa)) is the Radical SAM core domain. The TRAM domain maps to 384 to 446 (RACMGRRFDI…PNSLAGQVVD (63 aa)).

It belongs to the methylthiotransferase family. MiaB subfamily. As to quaternary structure, monomer. It depends on [4Fe-4S] cluster as a cofactor.

Its subcellular location is the cytoplasm. The enzyme catalyses N(6)-dimethylallyladenosine(37) in tRNA + (sulfur carrier)-SH + AH2 + 2 S-adenosyl-L-methionine = 2-methylsulfanyl-N(6)-dimethylallyladenosine(37) in tRNA + (sulfur carrier)-H + 5'-deoxyadenosine + L-methionine + A + S-adenosyl-L-homocysteine + 2 H(+). In terms of biological role, catalyzes the methylthiolation of N6-(dimethylallyl)adenosine (i(6)A), leading to the formation of 2-methylthio-N6-(dimethylallyl)adenosine (ms(2)i(6)A) at position 37 in tRNAs that read codons beginning with uridine. The chain is tRNA-2-methylthio-N(6)-dimethylallyladenosine synthase from Azorhizobium caulinodans (strain ATCC 43989 / DSM 5975 / JCM 20966 / LMG 6465 / NBRC 14845 / NCIMB 13405 / ORS 571).